Reading from the N-terminus, the 369-residue chain is MMTMLRGWITMIVMLTAINAQAACSWPAWEQFKKDYISQQGRVIDPGDARKITTSEGQSYAMFFALAANDRPAFAQLFNWTQNNLAQGSLREHLPAWLWGQKDPDTWSVLDSNSASDGDIWMAWSLLEAGRLWKETRYTEVGTALLKRIAREEVVNVPGLGSMLLPGKIGFAEANSWRFNPSYLPPQLAQYFSRFGAPWSTLRETNLRLLLETSPKGFSPDWVRYESKQGWQLKAEKTLISSYDAIRVYLWTGMMHDGDPQKARLLARFKPMATLTMKNGVPPEKVDVVSGNAQGTGPVGFSAALLPFLQNRGAQAVQRQRVADHFPGSDAYYNYVLTLFGQGWDQHRFRFTVKGELLPDWGQECVSSR.

The first 22 residues, 1–22 (MMTMLRGWITMIVMLTAINAQA), serve as a signal peptide directing secretion. The Proton donor role is filled by Glu-56. Asp-117 serves as the catalytic Nucleophile.

The protein belongs to the glycosyl hydrolase 8 (cellulase D) family.

The protein resides in the secreted. The catalysed reaction is Endohydrolysis of (1-&gt;4)-beta-D-glucosidic linkages in cellulose, lichenin and cereal beta-D-glucans.. It functions in the pathway glycan metabolism; bacterial cellulose biosynthesis. Hydrolyzes carboxymethylcellulose. The sequence is that of Endoglucanase (bcsZ) from Salmonella typhi.